The following is a 163-amino-acid chain: Phosphopantetheine adenylyltransferase (163 aa).

T10 lines the substrate pocket. ATP is bound by residues T10–F11 and H18. Substrate-binding residues include K42, L74, and R88. Residues G89–R91, E99, and N124–T130 each bind ATP.

The protein belongs to the bacterial CoaD family. In terms of assembly, homohexamer. Mg(2+) is required as a cofactor.

The protein localises to the cytoplasm. The catalysed reaction is (R)-4'-phosphopantetheine + ATP + H(+) = 3'-dephospho-CoA + diphosphate. The protein operates within cofactor biosynthesis; coenzyme A biosynthesis; CoA from (R)-pantothenate: step 4/5. Functionally, reversibly transfers an adenylyl group from ATP to 4'-phosphopantetheine, yielding dephospho-CoA (dPCoA) and pyrophosphate. The chain is Phosphopantetheine adenylyltransferase from Shewanella putrefaciens (strain CN-32 / ATCC BAA-453).